The primary structure comprises 105 residues: Nitrogen fixation nifHD2 region GlnB-like protein 1 (105 aa).

It belongs to the P(II) protein family.

In terms of biological role, could be involved in the regulation of nitrogen fixation. The polypeptide is Nitrogen fixation nifHD2 region GlnB-like protein 1 (Methanosarcina barkeri).